A 928-amino-acid polypeptide reads, in one-letter code: Outer membrane protein SlpA (928 aa).

The first 23 residues, 1–23 (MKKRLVTLLAGLLTVLSMGFGLA), serve as a signal peptide directing secretion. The 61-residue stretch at 24-84 (QFSDVPAGHW…QQIEEELKTQ (61 aa)) folds into the SLH domain.

Homotrimer.

The protein resides in the cell outer membrane. Its function is as follows. Plays an important role in the structural organization and integrity of the cell envelope, bridging the outer membrane to the peptidoglyan layer. Appears to be a nonselective channel. In Thermus thermophilus (strain ATCC 27634 / DSM 579 / HB8), this protein is Outer membrane protein SlpA (slpA).